We begin with the raw amino-acid sequence, 118 residues long: SPbeta prophage-derived uncharacterized protein YoqR (118 aa).

This Bacillus subtilis (strain 168) protein is SPbeta prophage-derived uncharacterized protein YoqR (yoqR).